Reading from the N-terminus, the 496-residue chain is Aspartyl/glutamyl-tRNA(Asn/Gln) amidotransferase subunit B (496 aa).

The protein belongs to the GatB/GatE family. GatB subfamily. As to quaternary structure, heterotrimer of A, B and C subunits.

It catalyses the reaction L-glutamyl-tRNA(Gln) + L-glutamine + ATP + H2O = L-glutaminyl-tRNA(Gln) + L-glutamate + ADP + phosphate + H(+). The catalysed reaction is L-aspartyl-tRNA(Asn) + L-glutamine + ATP + H2O = L-asparaginyl-tRNA(Asn) + L-glutamate + ADP + phosphate + 2 H(+). Functionally, allows the formation of correctly charged Asn-tRNA(Asn) or Gln-tRNA(Gln) through the transamidation of misacylated Asp-tRNA(Asn) or Glu-tRNA(Gln) in organisms which lack either or both of asparaginyl-tRNA or glutaminyl-tRNA synthetases. The reaction takes place in the presence of glutamine and ATP through an activated phospho-Asp-tRNA(Asn) or phospho-Glu-tRNA(Gln). This Nitrosospira multiformis (strain ATCC 25196 / NCIMB 11849 / C 71) protein is Aspartyl/glutamyl-tRNA(Asn/Gln) amidotransferase subunit B.